A 248-amino-acid polypeptide reads, in one-letter code: Fasciclin-like arabinogalactan protein 19 (248 aa).

A signal peptide spans 1-29 (MAKISSASCFRAIFLGALIILCLPHPSTG). The region spanning 35–166 (LERAIAILRV…IAVHGLADLL (132 aa)) is the FAS1 domain. 2 N-linked (GlcNAc...) asparagine glycosylation sites follow: N114 and N136. Over residues 213 to 226 (SPSVEEVSPSPSWG) the composition is skewed to low complexity. Positions 213-248 (SPSVEEVSPSPSWGEGEEDFIVGDEGGPLDGRNNGF) are disordered.

Belongs to the fasciclin-like AGP family.

It localises to the secreted. In terms of biological role, may be a cell surface adhesion protein. This Arabidopsis thaliana (Mouse-ear cress) protein is Fasciclin-like arabinogalactan protein 19 (FLA19).